A 569-amino-acid chain; its full sequence is Urease subunit alpha (569 aa).

Residues 132–569 (GGVDTHIHFI…VPLGQRYFLF (438 aa)) enclose the Urease domain. Ni(2+)-binding residues include histidine 137, histidine 139, and lysine 220. The residue at position 220 (lysine 220) is an N6-carboxylysine. Histidine 222 is a binding site for substrate. The Ni(2+) site is built by histidine 249 and histidine 275. Residue histidine 323 is the Proton donor of the active site. Aspartate 363 is a Ni(2+) binding site.

This sequence belongs to the metallo-dependent hydrolases superfamily. Urease alpha subunit family. In terms of assembly, heterotrimer of UreA (gamma), UreB (beta) and UreC (alpha) subunits. Three heterotrimers associate to form the active enzyme. Ni cation is required as a cofactor. In terms of processing, carboxylation allows a single lysine to coordinate two nickel ions.

The protein localises to the cytoplasm. It catalyses the reaction urea + 2 H2O + H(+) = hydrogencarbonate + 2 NH4(+). It participates in nitrogen metabolism; urea degradation; CO(2) and NH(3) from urea (urease route): step 1/1. This is Urease subunit alpha from Bacillus subtilis (strain 168).